Consider the following 147-residue polypeptide: Large ribosomal subunit protein uL11 (147 aa).

Belongs to the universal ribosomal protein uL11 family. Part of the ribosomal stalk of the 50S ribosomal subunit. Interacts with L10 and the large rRNA to form the base of the stalk. L10 forms an elongated spine to which L12 dimers bind in a sequential fashion forming a multimeric L10(L12)X complex. Post-translationally, one or more lysine residues are methylated.

Functionally, forms part of the ribosomal stalk which helps the ribosome interact with GTP-bound translation factors. This Metamycoplasma arthritidis (strain 158L3-1) (Mycoplasma arthritidis) protein is Large ribosomal subunit protein uL11.